Reading from the N-terminus, the 324-residue chain is Galectin-4 (324 aa).

Galectin domains are found at residues 19-150 (YKRP…INFL) and 196-324 (YVGT…YVQI). 257–263 (WGSEERK) contacts a beta-D-galactoside. Position 259 is a phosphoserine (serine 259).

As to quaternary structure, monomer. Highly expressed in full-length form in small and large intestine and stomach but was not detected in other tissues including lung, liver, kidney and spleen.

Galectin that binds lactose and a related range of sugars. The sequence is that of Galectin-4 (Lgals4) from Rattus norvegicus (Rat).